The sequence spans 81 residues: Cytotoxin 5 (81 aa).

Positions 1–21 (MKTLLLTLVVVTIVCLDLGYT) are cleaved as a signal peptide. Disulfide bonds link Cys24–Cys42, Cys35–Cys59, Cys63–Cys74, and Cys75–Cys80.

This sequence belongs to the three-finger toxin family. Short-chain subfamily. Type IA cytotoxin sub-subfamily. In terms of assembly, monomer in solution; Homodimer and oligomer in the presence of negatively charged lipids forming a pore with a size ranging between 20 and 30 Angstroms. As to expression, expressed by the venom gland.

Its subcellular location is the secreted. It localises to the target cell membrane. In terms of biological role, shows cytolytic activity on many different cells by forming pore in lipid membranes. In vivo, increases heart rate or kills the animal by cardiac arrest. In addition, it binds to heparin with high affinity, interacts with Kv channel-interacting protein 1 (KCNIP1) in a calcium-independent manner, and binds to integrin alpha-V/beta-3 (ITGAV/ITGB3) with moderate affinity. The sequence is that of Cytotoxin 5 from Naja atra (Chinese cobra).